We begin with the raw amino-acid sequence, 264 residues long: S-adenosylmethionine decarboxylase proenzyme (264 aa).

The active-site Schiff-base intermediate with substrate; via pyruvic acid is S113. Residue S113 is modified to Pyruvic acid (Ser); by autocatalysis. Residue H118 is the Proton acceptor; for processing activity of the active site. Catalysis depends on C141, which acts as the Proton donor; for catalytic activity.

Belongs to the prokaryotic AdoMetDC family. Type 2 subfamily. Heterooctamer of four alpha and four beta chains arranged as a tetramer of alpha/beta heterodimers. Pyruvate is required as a cofactor. Is synthesized initially as an inactive proenzyme. Formation of the active enzyme involves a self-maturation process in which the active site pyruvoyl group is generated from an internal serine residue via an autocatalytic post-translational modification. Two non-identical subunits are generated from the proenzyme in this reaction, and the pyruvate is formed at the N-terminus of the alpha chain, which is derived from the carboxyl end of the proenzyme. The post-translation cleavage follows an unusual pathway, termed non-hydrolytic serinolysis, in which the side chain hydroxyl group of the serine supplies its oxygen atom to form the C-terminus of the beta chain, while the remainder of the serine residue undergoes an oxidative deamination to produce ammonia and the pyruvoyl group blocking the N-terminus of the alpha chain.

The catalysed reaction is S-adenosyl-L-methionine + H(+) = S-adenosyl 3-(methylsulfanyl)propylamine + CO2. Its pathway is amine and polyamine biosynthesis; S-adenosylmethioninamine biosynthesis; S-adenosylmethioninamine from S-adenosyl-L-methionine: step 1/1. Catalyzes the decarboxylation of S-adenosylmethionine to S-adenosylmethioninamine (dcAdoMet), the propylamine donor required for the synthesis of the polyamines spermine and spermidine from the diamine putrescine. This is S-adenosylmethionine decarboxylase proenzyme from Xylella fastidiosa (strain 9a5c).